The chain runs to 134 residues: T-cell receptor beta chain V region CTL-F3 (134 aa).

The N-terminal stretch at 1-19 (MAPRLLFCLVLCFLRAEPT) is a signal peptide. The v segment stretch occupies residues 20–115 (NAGVIQTPRH…SAVYLCASSL (96 aa)). C42 and C111 form a disulfide bridge. N90 carries N-linked (GlcNAc...) asparagine glycosylation. Positions 116 to 119 (STGV) are d segment. The interval 120–134 (SYEQYFGPGTRLTVL) is j segment.

The chain is T-cell receptor beta chain V region CTL-F3 from Mus musculus (Mouse).